The chain runs to 235 residues: Serine protease SplA (235 aa).

A signal peptide spans 1–35 (MNENVMVKGLTALTILTSLGFAENISNQPHSIAKA). Residues His-74, Asp-113, and Ser-189 each act as charge relay system in the active site.

It belongs to the peptidase S1B family.

The protein resides in the secreted. The protein is Serine protease SplA (splA) of Staphylococcus aureus (strain MSSA476).